The sequence spans 122 residues: Large ribosomal subunit protein uL14 (122 aa).

It belongs to the universal ribosomal protein uL14 family. As to quaternary structure, part of the 50S ribosomal subunit. Forms a cluster with proteins L3 and L19. In the 70S ribosome, L14 and L19 interact and together make contacts with the 16S rRNA in bridges B5 and B8.

Its function is as follows. Binds to 23S rRNA. Forms part of two intersubunit bridges in the 70S ribosome. In Leuconostoc citreum (strain KM20), this protein is Large ribosomal subunit protein uL14.